We begin with the raw amino-acid sequence, 351 residues long: tRNA-splicing endonuclease (351 aa).

Catalysis depends on residues Tyr287, His298, and Lys329.

Belongs to the tRNA-intron endonuclease family. Archaeal long subfamily. Homodimer.

The catalysed reaction is pretRNA = a 3'-half-tRNA molecule with a 5'-OH end + a 5'-half-tRNA molecule with a 2',3'-cyclic phosphate end + an intron with a 2',3'-cyclic phosphate and a 5'-hydroxyl terminus.. Its function is as follows. Endonuclease that removes tRNA introns. Cleaves pre-tRNA at the 5'- and 3'-splice sites to release the intron. The products are an intron and two tRNA half-molecules bearing 2',3' cyclic phosphate and 5'-OH termini. Recognizes a pseudosymmetric substrate in which 2 bulged loops of 3 bases are separated by a stem of 4 bp. The chain is tRNA-splicing endonuclease from Methanococcoides burtonii (strain DSM 6242 / NBRC 107633 / OCM 468 / ACE-M).